The sequence spans 192 residues: MFLHLILLAGLAPVVYLWCTPFIACNQTVYGDFSDIEKGMKVILLGRPFQKMDQLIITGEYYNNGSEVMDDAAFTVGLSKGLIMHQLGMDDLEQYLLTTTLGASEERMNISGKLLGRKKDTFLIVEKAKPNVTCADPFTFVIKSQDGYGFAFGSVQSSELKYTAQVALQYPKNEQSQSVFFDGKIKTSKIEL.

The N-terminal stretch at Met-1–Leu-17 is a signal peptide.

This is an uncharacterized protein from Caenorhabditis elegans.